The chain runs to 293 residues: Acetyl-coenzyme A carboxylase carboxyl transferase subunit beta (293 aa).

In terms of domain architecture, CoA carboxyltransferase N-terminal spans 29-293 (LWVKCSECSQ…GVKELAEANT (265 aa)). Zn(2+) contacts are provided by cysteine 33, cysteine 36, cysteine 52, and cysteine 55. The C4-type zinc finger occupies 33-55 (CSECSQVAYRKDLISNFNVCSNC).

It belongs to the AccD/PCCB family. As to quaternary structure, acetyl-CoA carboxylase is a heterohexamer composed of biotin carboxyl carrier protein (AccB), biotin carboxylase (AccC) and two subunits each of ACCase subunit alpha (AccA) and ACCase subunit beta (AccD). Zn(2+) serves as cofactor.

The protein resides in the cytoplasm. The catalysed reaction is N(6)-carboxybiotinyl-L-lysyl-[protein] + acetyl-CoA = N(6)-biotinyl-L-lysyl-[protein] + malonyl-CoA. It functions in the pathway lipid metabolism; malonyl-CoA biosynthesis; malonyl-CoA from acetyl-CoA: step 1/1. Its function is as follows. Component of the acetyl coenzyme A carboxylase (ACC) complex. Biotin carboxylase (BC) catalyzes the carboxylation of biotin on its carrier protein (BCCP) and then the CO(2) group is transferred by the transcarboxylase to acetyl-CoA to form malonyl-CoA. The protein is Acetyl-coenzyme A carboxylase carboxyl transferase subunit beta of Prochlorococcus marinus (strain MIT 9301).